A 382-amino-acid polypeptide reads, in one-letter code: Anhydro-N-acetylmuramic acid kinase (382 aa).

9-16 provides a ligand contact to ATP; that stretch reads GTSLDGID.

It belongs to the anhydro-N-acetylmuramic acid kinase family.

It carries out the reaction 1,6-anhydro-N-acetyl-beta-muramate + ATP + H2O = N-acetyl-D-muramate 6-phosphate + ADP + H(+). It participates in amino-sugar metabolism; 1,6-anhydro-N-acetylmuramate degradation. The protein operates within cell wall biogenesis; peptidoglycan recycling. Functionally, catalyzes the specific phosphorylation of 1,6-anhydro-N-acetylmuramic acid (anhMurNAc) with the simultaneous cleavage of the 1,6-anhydro ring, generating MurNAc-6-P. Is required for the utilization of anhMurNAc either imported from the medium or derived from its own cell wall murein, and thus plays a role in cell wall recycling. This Bacillus cereus (strain AH820) protein is Anhydro-N-acetylmuramic acid kinase.